The primary structure comprises 195 residues: ATP-dependent Clp protease proteolytic subunit (195 aa).

Ser101 (nucleophile) is an active-site residue. Residue His126 is part of the active site.

The protein belongs to the peptidase S14 family.

It is found in the plastid. It localises to the chloroplast stroma. The catalysed reaction is Hydrolysis of proteins to small peptides in the presence of ATP and magnesium. alpha-casein is the usual test substrate. In the absence of ATP, only oligopeptides shorter than five residues are hydrolyzed (such as succinyl-Leu-Tyr-|-NHMec, and Leu-Tyr-Leu-|-Tyr-Trp, in which cleavage of the -Tyr-|-Leu- and -Tyr-|-Trp bonds also occurs).. Functionally, cleaves peptides in various proteins in a process that requires ATP hydrolysis. Has a chymotrypsin-like activity. Plays a major role in the degradation of misfolded proteins. The sequence is that of ATP-dependent Clp protease proteolytic subunit from Bigelowiella natans (Pedinomonas minutissima).